Consider the following 347-residue polypeptide: Haptoglobin (347 aa).

Residues 1 to 18 form the signal peptide; the sequence is MSALGAVIALLLWGQLFA. The 58-residue stretch at 31 to 88 folds into the Sushi domain; that stretch reads DGCPKPPQIAHGYVEHSVRYQCKNYYRLRTEGDGVYTLNSEKQWINKAVGDKLPECEA. 4 disulfide bridges follow: C52-C86, C90-C207, C250-C281, and C292-C322. A Peptidase S1 domain is found at 103–347; the sequence is ILGGHLDAKG…DWVQKTIAKN (245 aa). 4 N-linked (GlcNAc...) asparagine glycosylation sites follow: N125, N148, N152, and N182. Positions 259–264 are interaction with CD163; that stretch reads VPEKKT.

It belongs to the peptidase S1 family. As to quaternary structure, tetramer of two alpha and two beta chains; disulfide-linked. The hemoglobin/haptoglobin complex is composed of a haptoglobin dimer bound to two hemoglobin alpha-beta dimers. Interacts with CD163. Interacts with ERGIC3.

The protein resides in the secreted. In terms of biological role, as a result of hemolysis, hemoglobin is found to accumulate in the kidney and is secreted in the urine. Haptoglobin captures, and combines with free plasma hemoglobin to allow hepatic recycling of heme iron and to prevent kidney damage. Haptoglobin also acts as an antioxidant, has antibacterial activity and plays a role in modulating many aspects of the acute phase response. Hemoglobin/haptoglobin complexes are rapidly cleared by the macrophage CD163 scavenger receptor expressed on the surface of liver Kupfer cells through an endocytic lysosomal degradation pathway. The chain is Haptoglobin (HP) from Pongo abelii (Sumatran orangutan).